A 322-amino-acid chain; its full sequence is Gluconeogenesis factor (322 aa).

The protein belongs to the gluconeogenesis factor family.

Its subcellular location is the cytoplasm. In terms of biological role, required for morphogenesis under gluconeogenic growth conditions. The sequence is that of Gluconeogenesis factor from Listeria innocua serovar 6a (strain ATCC BAA-680 / CLIP 11262).